Consider the following 253-residue polypeptide: Phosphate import ATP-binding protein PstB 1 (253 aa).

Residues 7-248 enclose the ABC transporter domain; it reads LQIRDLSVYY…PKRKETEDYI (242 aa). 39-46 is a binding site for ATP; the sequence is GPSGSGKS.

The protein belongs to the ABC transporter superfamily. Phosphate importer (TC 3.A.1.7) family. The complex is composed of two ATP-binding proteins (PstB), two transmembrane proteins (PstC and PstA) and a solute-binding protein (PstS).

The protein resides in the cell membrane. It carries out the reaction phosphate(out) + ATP + H2O = ADP + 2 phosphate(in) + H(+). In terms of biological role, part of the ABC transporter complex PstSACB involved in phosphate import. Responsible for energy coupling to the transport system. This is Phosphate import ATP-binding protein PstB 1 from Streptococcus pyogenes serotype M2 (strain MGAS10270).